The sequence spans 115 residues: Toxin CSTX-9 (115 aa).

A signal peptide spans methionine 1 to alanine 20. A propeptide spanning residues glutamate 21 to arginine 47 is cleaved from the precursor. Cystine bridges form between cysteine 53/cysteine 68, cysteine 60/cysteine 77, cysteine 67/cysteine 95, and cysteine 79/cysteine 93.

This sequence belongs to the neurotoxin 19 (CSTX) family. Monomer. Interacts with CSTX-13 (AC P83919) (Kd=370 nM), but does not interact with CSTX-1 (AC P81694). As to expression, expressed by the venom gland.

The protein resides in the secreted. It is found in the target cell membrane. Functionally, synergistic toxin that induces or increases a cytolytic effect when combined with CSTX-1 (AC P81694) or CSTX-13 (AC P83919). Potassium ions and M-ctenitoxin-Cs1a (AC P83619) have also an effect on its activity. When alone, has no insecticidal activity. This Cupiennius salei (American wandering spider) protein is Toxin CSTX-9.